Consider the following 55-residue polypeptide: Protein CADMIUM TOLERANCE 2 (55 aa).

The helical transmembrane segment at 24–40 threads the bilayer; it reads GCLYACIFTALCCFCCY.

It belongs to the CYSTM1 family. As to expression, expressed only in roots.

The protein localises to the cell membrane. It is found in the secreted. It localises to the cell wall. In terms of biological role, confers resistance to heavy metal ions (e.g. cadmium (CdCl(2)) and copper (CuCl(2))) by chelating them at the plasma membrane of root cells, thus stopping their entry and reducing their accumulation. This chain is Protein CADMIUM TOLERANCE 2, found in Oryza sativa subsp. japonica (Rice).